The sequence spans 135 residues: C-type Lectin CRL (135 aa).

4 disulfide bridges follow: Cys3-Cys14, Cys31-Cys131, Cys38-Cys133, and Cys106-Cys123. The 123-residue stretch at Met10–Gln132 folds into the C-type lectin domain. Positions 96, 98, 104, 119, and 120 each coordinate Ca(2+). The short motif at Gln96 to Asp98 is the Galactose-binding element.

This sequence belongs to the true venom lectin family. As to quaternary structure, homodimer; disulfide-linked. Expressed by the venom gland.

It localises to the secreted. In terms of biological role, beta-galactoside and N-acetylgalactosamine (GalNAc) specific C-type lectin. In Crotalus ruber ruber (Red diamond rattlesnake), this protein is C-type Lectin CRL.